Consider the following 338-residue polypeptide: Large ribosomal subunit protein uL10 (338 aa).

Residues 292–338 (LDDDLKERVSSTASAVEAKEEEAPKEEKEEEKEEEEEAPAAGLGMLF) are disordered. The segment covering 308–318 (EAKEEEAPKEE) has biased composition (basic and acidic residues). A compositionally biased stretch (acidic residues) spans 319–329 (KEEEKEEEEEA).

The protein belongs to the universal ribosomal protein uL10 family. In terms of assembly, part of the 50S ribosomal subunit. Forms part of the ribosomal stalk which helps the ribosome interact with GTP-bound translation factors. Forms a heptameric L10(L12)2(L12)2(L12)2 complex, where L10 forms an elongated spine to which the L12 dimers bind in a sequential fashion.

Functionally, forms part of the ribosomal stalk, playing a central role in the interaction of the ribosome with GTP-bound translation factors. This Methanococcus aeolicus (strain ATCC BAA-1280 / DSM 17508 / OCM 812 / Nankai-3) protein is Large ribosomal subunit protein uL10.